A 176-amino-acid chain; its full sequence is Xanthine-guanine phosphoribosyltransferase (176 aa).

5-phospho-alpha-D-ribose 1-diphosphate-binding positions include 51–52 (RG) and 110–118 (DDLVDTGKT). Asp-111 serves as a coordination point for Mg(2+). Guanine contacts are provided by Asp-114 and Ile-157. Xanthine-binding residues include Asp-114 and Ile-157. Residues 114-118 (DTGKT) and 156-157 (WI) each bind GMP.

It belongs to the purine/pyrimidine phosphoribosyltransferase family. XGPT subfamily. In terms of assembly, homotetramer. Mg(2+) serves as cofactor.

The protein localises to the cell inner membrane. The catalysed reaction is GMP + diphosphate = guanine + 5-phospho-alpha-D-ribose 1-diphosphate. It catalyses the reaction XMP + diphosphate = xanthine + 5-phospho-alpha-D-ribose 1-diphosphate. The enzyme catalyses IMP + diphosphate = hypoxanthine + 5-phospho-alpha-D-ribose 1-diphosphate. It functions in the pathway purine metabolism; GMP biosynthesis via salvage pathway; GMP from guanine: step 1/1. Its pathway is purine metabolism; XMP biosynthesis via salvage pathway; XMP from xanthine: step 1/1. In terms of biological role, purine salvage pathway enzyme that catalyzes the transfer of the ribosyl-5-phosphate group from 5-phospho-alpha-D-ribose 1-diphosphate (PRPP) to the N9 position of the 6-oxopurines guanine and xanthine to form the corresponding ribonucleotides GMP (guanosine 5'-monophosphate) and XMP (xanthosine 5'-monophosphate), with the release of PPi. To a lesser extent, also acts on hypoxanthine. The polypeptide is Xanthine-guanine phosphoribosyltransferase (Bradyrhizobium diazoefficiens (strain JCM 10833 / BCRC 13528 / IAM 13628 / NBRC 14792 / USDA 110)).